The chain runs to 279 residues: Lyso-glycine lipid O-acyltransferase (279 aa).

It belongs to the O-acyltransferase GlsA family.

It carries out the reaction a lyso-glycine lipid + a fatty acyl-[ACP] = a glycine lipid + holo-[ACP]. The catalysed reaction is N-[(3R)-3-hydroxyhexadecanoyl]-glycine + hexadecanoyl-[ACP] = N-[(3R)-3-(hexadecanoyloxy)hexadecanoyl]-glycine + holo-[ACP]. Its pathway is lipid metabolism. Functionally, is involved in the production of glycine lipids (GL), which are phosphorus-free membrane lipids. Catalyzes the second step of GL biosynthesis, i.e. the O-acylation of the hydroxyl group of lyso-glycine lipids, resulting in the production of the mature diacylated glycine lipids. The polypeptide is Lyso-glycine lipid O-acyltransferase (Phocaeicola vulgatus (strain ATCC 8482 / DSM 1447 / JCM 5826 / CCUG 4940 / NBRC 14291 / NCTC 11154) (Bacteroides vulgatus)).